Consider the following 61-residue polypeptide: Metallothionein-1D (61 aa).

The interval 1–29 (MDPNCSCSTGGSCSCATSCTCKACRCTSC) is beta. The a divalent metal cation site is built by Cys-5, Cys-7, Cys-13, Cys-15, Cys-19, Cys-21, Cys-24, Cys-26, Cys-29, Cys-33, Cys-34, Cys-36, Cys-37, Cys-41, Cys-44, Cys-48, Cys-50, Cys-57, Cys-59, and Cys-60. The segment at 30–61 (KKSCCSCCPAGCAKCAQGCICKGASDKCSCCA) is alpha.

Belongs to the metallothionein superfamily. Type 1 family. As to quaternary structure, monomer.

Functionally, metallothioneins have a high content of cysteine residues that bind various heavy metals; these proteins are transcriptionally regulated by both heavy metals and glucocorticoids. The protein is Metallothionein-1D (MT1D) of Sus scrofa (Pig).